The sequence spans 217 residues: Uridylate kinase (217 aa).

Lysine 6–arginine 10 is a binding site for ATP. UMP is bound at residue glycine 38. Residues glycine 39 and arginine 43 each coordinate ATP. UMP contacts are provided by residues aspartate 60 and phenylalanine 107–threonine 113. Positions 134, 139, and 142 each coordinate ATP.

This sequence belongs to the UMP kinase family. As to quaternary structure, homohexamer.

It is found in the cytoplasm. It catalyses the reaction UMP + ATP = UDP + ADP. It functions in the pathway pyrimidine metabolism; CTP biosynthesis via de novo pathway; UDP from UMP (UMPK route): step 1/1. Inhibited by UTP. Its function is as follows. Catalyzes the reversible phosphorylation of UMP to UDP. The chain is Uridylate kinase from Pyrobaculum neutrophilum (strain DSM 2338 / JCM 9278 / NBRC 100436 / V24Sta) (Thermoproteus neutrophilus).